The following is a 1049-amino-acid chain: Probable disease resistance protein RF9 (1049 aa).

Residues 25-41 (QGVEDQVTELKRDLNLL) are a coiled coil. The segment at 139-158 (GYKQPQGDKQREMRPRFSKD) is disordered. A compositionally biased stretch (basic and acidic residues) spans 144–158 (QGDKQREMRPRFSKD). The NB-ARC domain occupies 147–460 (KQREMRPRFS…AEGIFQPRHY (314 aa)). ATP is bound at residue 190-197 (GMGGLGKT). LRR repeat units follow at residues 584–608 (LELLRVLDIHRAKLKGGKLASSIGQ), 609–634 (LIHLRYLNLKHAEVTHIPYSLGNLKL), 657–682 (MQQLRYLALPKDMGRKTKLELSNLVK), 683–707 (LETLKNFSTKNCSLEDLRGMVRLRT), 776–799 (PSHLTTLYLQHCRLEEDPMPILEK), 800–827 (LHQLKELELRRKSFSGKEMVCSSGGFPQ), 849–873 (MPVLHTLDIRDCRKLKQLPDEHLPS), 896–923 (LVHLKELQLLFRSFSGRIMVCAGSGFPQ), 945–968 (MPQLHTLEIRRCPKLKKLPNGFPQ), and 990–1015 (MPLLHTLRIWNCPKLKQLPDGLRFIY).

It belongs to the disease resistance NB-LRR family.

Functionally, potential disease resistance protein. The sequence is that of Probable disease resistance protein RF9 (RF9) from Arabidopsis thaliana (Mouse-ear cress).